Consider the following 164-residue polypeptide: Transcription elongation factor GreA (164 aa).

Residues 50–76 adopt a coiled-coil conformation; the sequence is YHAAREEQGQQEARIRQLQELLNNAKV.

This sequence belongs to the GreA/GreB family.

In terms of biological role, necessary for efficient RNA polymerase transcription elongation past template-encoded arresting sites. The arresting sites in DNA have the property of trapping a certain fraction of elongating RNA polymerases that pass through, resulting in locked ternary complexes. Cleavage of the nascent transcript by cleavage factors such as GreA or GreB allows the resumption of elongation from the new 3'terminus. GreA releases sequences of 2 to 3 nucleotides. The sequence is that of Transcription elongation factor GreA from Mycolicibacterium smegmatis (strain ATCC 700084 / mc(2)155) (Mycobacterium smegmatis).